A 162-amino-acid chain; its full sequence is Caveolin-2 (162 aa).

The Cytoplasmic segment spans residues Met-1–Lys-86. Tyr-19 carries the post-translational modification Phosphotyrosine; by SRC. Phosphoserine is present on residues Ser-20 and Ser-23. Residue Tyr-27 is modified to Phosphotyrosine; by SRC. Position 36 is a phosphoserine (Ser-36). Positions Phe-87 to Leu-107 form an intramembrane region, helical. At Ser-108–Asp-162 the chain is on the cytoplasmic side.

Belongs to the caveolin family. In terms of assembly, monomer or homodimer. Interacts with CAV1; the interaction forms a stable heterooligomeric complex that is required for targeting to lipid rafts and for caveolae formation. Tyrosine phosphorylated forms do not form heterooligomers with the Tyr-19-phosphorylated form existing as a monomer or dimer, and the Tyr-27-form as a monomer only. Interacts (tyrosine phosphorylated form) with the SH2 domain-containing proteins, RASA1, NCK1 and SRC. Interacts (tyrosine phosphorylated form) with INSR, the interaction (Tyr-27-phosphorylated form) is increased on insulin stimulation. Interacts (Tyr-19 phosphorylated form) with MAPK1 (phosphorylated form); the interaction, promoted by insulin, leads to nuclear location and MAPK1 activation. Interacts with STAT3; the interaction is increased on insulin-induced tyrosine phosphorylation leading to STAT activation. Phosphorylated on serine and tyrosine residues. CAV1 promotes phosphorylation on Ser-23 which then targets the complex to the plasma membrane, lipid rafts and caveolae. Phosphorylation on Ser-36 appears to modulate mitosis in endothelial cells. Phosphorylation on both Tyr-19 and Tyr-27 is required for insulin-induced 'Ser-727' phosphorylation of STAT3 and its activation. Phosphorylation on Tyr-19 is required for insulin-induced phosphorylation of MAPK1 and DNA binding of STAT3. Tyrosine phosphorylation is induced by both EGF and insulin (By. similarity).

Its subcellular location is the nucleus. The protein resides in the cytoplasm. The protein localises to the golgi apparatus membrane. It localises to the cell membrane. It is found in the membrane. Its subcellular location is the caveola. May act as a scaffolding protein within caveolar membranes. Interacts directly with G-protein alpha subunits and can functionally regulate their activity. Acts as an accessory protein in conjunction with CAV1 in targeting to lipid rafts and driving caveolae formation. The Ser-36 phosphorylated form has a role in modulating mitosis in endothelial cells. Positive regulator of cellular mitogenesis of the MAPK signaling pathway. Required for the insulin-stimulated nuclear translocation and activation of MAPK1 and STAT3, and the subsequent regulation of cell cycle progression. The protein is Caveolin-2 (CAV2) of Pongo abelii (Sumatran orangutan).